Consider the following 581-residue polypeptide: Adenine deaminase (581 aa).

The protein belongs to the metallo-dependent hydrolases superfamily. Adenine deaminase family. Mn(2+) serves as cofactor.

It carries out the reaction adenine + H2O + H(+) = hypoxanthine + NH4(+). This Brucella melitensis biotype 1 (strain ATCC 23456 / CCUG 17765 / NCTC 10094 / 16M) protein is Adenine deaminase.